Consider the following 689-residue polypeptide: Methionine--tRNA ligase (689 aa).

A 'HIGH' region motif is present at residues Pro15–His25. Cys146, Cys149, Cys159, and Cys162 together coordinate Zn(2+). The short motif at Lys332–Ser336 is the 'KMSKS' region element. ATP is bound at residue Lys335. The tract at residues Asp554–Pro574 is disordered. The tRNA-binding domain occupies Asp588–Lys689.

The protein belongs to the class-I aminoacyl-tRNA synthetase family. MetG type 1 subfamily. As to quaternary structure, homodimer. Zn(2+) serves as cofactor.

It localises to the cytoplasm. It catalyses the reaction tRNA(Met) + L-methionine + ATP = L-methionyl-tRNA(Met) + AMP + diphosphate. Functionally, is required not only for elongation of protein synthesis but also for the initiation of all mRNA translation through initiator tRNA(fMet) aminoacylation. The chain is Methionine--tRNA ligase from Shewanella baltica (strain OS185).